The sequence spans 277 residues: NH(3)-dependent NAD(+) synthetase (277 aa).

36-43 (GLSGGIDS) contributes to the ATP binding site. Mg(2+) is bound at residue Asp-42. Position 118 (Arg-118) interacts with deamido-NAD(+). Thr-138 is a binding site for ATP. Glu-143 serves as a coordination point for Mg(2+). ATP-binding residues include Lys-167 and Ser-189.

Belongs to the NAD synthetase family. In terms of assembly, homodimer.

The catalysed reaction is deamido-NAD(+) + NH4(+) + ATP = AMP + diphosphate + NAD(+) + H(+). It participates in cofactor biosynthesis; NAD(+) biosynthesis; NAD(+) from deamido-NAD(+) (ammonia route): step 1/1. Its function is as follows. Catalyzes the ATP-dependent amidation of deamido-NAD to form NAD. Uses ammonia as a nitrogen source. In Chlorobium phaeobacteroides (strain BS1), this protein is NH(3)-dependent NAD(+) synthetase.